A 216-amino-acid polypeptide reads, in one-letter code: MNVKNQIILALDVEEKNKAYEILDQTTEYLDTIKIGYPITLALGPSIITSIKEEYDVKIIADFKVADIDATNEKIVKTTLNYGADAIIVHGFTGEDSVLACKNMAEKLDKEIFLLTEMSHPGADKFLKPVSLDIAQMGVDLGIKNYVAPATKIDRLKKIREVVGKDSFIISPGVGFQGGNAKDTLQYSNAAIVGRSIYNASNPKKALEEIIESIKV.

Residues Asp-12, Lys-34, 62 to 71 (DFKVADIDAT), Ser-119, 172 to 182 (PGVGFQGGNAK), Gly-194, and Arg-195 contribute to the substrate site. The Proton donor role is filled by Lys-64.

This sequence belongs to the OMP decarboxylase family. Type 1 subfamily. Homodimer.

It catalyses the reaction orotidine 5'-phosphate + H(+) = UMP + CO2. The protein operates within pyrimidine metabolism; UMP biosynthesis via de novo pathway; UMP from orotate: step 2/2. Its function is as follows. Catalyzes the decarboxylation of orotidine 5'-monophosphate (OMP) to uridine 5'-monophosphate (UMP). This chain is Orotidine 5'-phosphate decarboxylase, found in Methanosphaera stadtmanae (strain ATCC 43021 / DSM 3091 / JCM 11832 / MCB-3).